The chain runs to 45 residues: Large ribosomal subunit protein bL34 (45 aa).

The segment at 1–27 (MTKRTLGGTSRKRKRVSGFRVRMRSHT) is disordered. Over residues 10-27 (SRKRKRVSGFRVRMRSHT) the composition is skewed to basic residues.

The protein belongs to the bacterial ribosomal protein bL34 family.

In Synechococcus sp. (strain CC9902), this protein is Large ribosomal subunit protein bL34.